The following is a 439-amino-acid chain: Probable non-inhibitory serpin-Z9 (439 aa).

Residues 12–44 form a disordered region; the sequence is RRPPFPAGDANHRRLSSAPAPKPEAPAEAMPPP. Positions 31 to 44 are enriched in pro residues; that stretch reads APKPEAPAEAMPPP. Residues 389–413 are RCL; the sequence is GIEETSVSMGLGKPLPAQHFKADHP.

The protein belongs to the serpin family.

In Oryza sativa subsp. japonica (Rice), this protein is Probable non-inhibitory serpin-Z9.